Reading from the N-terminus, the 195-residue chain is MEELPATAIGIKTKDGVVLAAERRLSYGDFVLSKSARKVFKLGRFGIAGAGIVGDIQTLTRIMNVEIKYYEMYNSRKISARAAAKLLSVILYQNKVLPYISELLFGGVDEDGPKLFILDPIGSLIEDSYAAVGSGARVAIGVLEAEYNESLTSEAAKELAIKSMKSAVERDVMSGDGIDILIINKNNIYEDFIKI.

Positions 1 to 6 are cleaved as a propeptide — removed in mature form; by autocatalysis; that stretch reads MEELPA. T7 serves as the catalytic Nucleophile.

It belongs to the peptidase T1B family. As to quaternary structure, the 20S proteasome core is composed of 14 alpha and 14 beta subunits that assemble into four stacked heptameric rings, resulting in a barrel-shaped structure. The two inner rings, each composed of seven catalytic beta subunits, are sandwiched by two outer rings, each composed of seven alpha subunits. The catalytic chamber with the active sites is on the inside of the barrel. Has a gated structure, the ends of the cylinder being occluded by the N-termini of the alpha-subunits. Is capped at one or both ends by the proteasome regulatory ATPase, PAN.

The protein resides in the cytoplasm. The catalysed reaction is Cleavage of peptide bonds with very broad specificity.. With respect to regulation, the formation of the proteasomal ATPase PAN-20S proteasome complex, via the docking of the C-termini of PAN into the intersubunit pockets in the alpha-rings, triggers opening of the gate for substrate entry. Interconversion between the open-gate and close-gate conformations leads to a dynamic regulation of the 20S proteasome proteolysis activity. Functionally, component of the proteasome core, a large protease complex with broad specificity involved in protein degradation. This chain is Proteasome subunit beta 1, found in Sulfolobus acidocaldarius (strain ATCC 33909 / DSM 639 / JCM 8929 / NBRC 15157 / NCIMB 11770).